The chain runs to 89 residues: Small ribosomal subunit protein uS15 (89 aa).

It belongs to the universal ribosomal protein uS15 family. As to quaternary structure, part of the 30S ribosomal subunit. Forms a bridge to the 50S subunit in the 70S ribosome, contacting the 23S rRNA.

Its function is as follows. One of the primary rRNA binding proteins, it binds directly to 16S rRNA where it helps nucleate assembly of the platform of the 30S subunit by binding and bridging several RNA helices of the 16S rRNA. Forms an intersubunit bridge (bridge B4) with the 23S rRNA of the 50S subunit in the ribosome. The sequence is that of Small ribosomal subunit protein uS15 from Shouchella clausii (strain KSM-K16) (Alkalihalobacillus clausii).